The following is a 620-amino-acid chain: Endoglucanase 21 (620 aa).

The interval 1–39 is disordered; sequence MYGRDPWGGPLEINAADSMTDDDRSRNLQDLDRATPSRP. The Cytoplasmic segment spans residues 1–70; sequence MYGRDPWGGP…DLGCILVSRK (70 aa). Over residues 21–39 the composition is skewed to basic and acidic residues; it reads DDDRSRNLQDLDRATPSRP. The chain crosses the membrane as a helical; Signal-anchor for type II membrane protein span at residues 71–91; that stretch reads IFLWTLGTIVVTALLSGFITL. The Extracellular segment spans residues 92–620; the sequence is IVKTLPHHHH…TPPPPAPWTP (529 aa). Asn-108 and Asn-134 each carry an N-linked (GlcNAc...) asparagine glycan. Asp-166 serves as the catalytic Nucleophile. Asn-217, Asn-325, Asn-346, Asn-409, Asn-426, and Asn-482 each carry an N-linked (GlcNAc...) asparagine glycan. Residues His-514 and Asp-561 contribute to the active site. N-linked (GlcNAc...) asparagine glycosylation is present at Asn-567. Residue Glu-570 is part of the active site.

This sequence belongs to the glycosyl hydrolase 9 (cellulase E) family. In terms of tissue distribution, expressed in conductive tissues of young roots, cotyledons, rosette leaves, cauline leaves and sepals. Expressed in the leaf trichome support cells.

The protein resides in the cell membrane. It catalyses the reaction Endohydrolysis of (1-&gt;4)-beta-D-glucosidic linkages in cellulose, lichenin and cereal beta-D-glucans.. The sequence is that of Endoglucanase 21 (KOR3) from Arabidopsis thaliana (Mouse-ear cress).